The chain runs to 539 residues: Glutamyl-tRNA(Gln) amidotransferase subunit A, mitochondrial (539 aa).

Catalysis depends on charge relay system residues Lys-94 and Ser-181. The active-site Acyl-ester intermediate is Ser-205.

The protein belongs to the amidase family. GatA subfamily. As to quaternary structure, subunit of the heterotrimeric GatCAB amidotransferase (AdT) complex, composed of A, B and C subunits.

It localises to the mitochondrion. The catalysed reaction is L-glutamyl-tRNA(Gln) + L-glutamine + ATP + H2O = L-glutaminyl-tRNA(Gln) + L-glutamate + ADP + phosphate + H(+). Allows the formation of correctly charged Gln-tRNA(Gln) through the transamidation of misacylated Glu-tRNA(Gln) in the mitochondria. The reaction takes place in the presence of glutamine and ATP through an activated gamma-phospho-Glu-tRNA(Gln). The chain is Glutamyl-tRNA(Gln) amidotransferase subunit A, mitochondrial from Mycosarcoma maydis (Corn smut fungus).